The primary structure comprises 159 residues: Ribosomal RNA large subunit methyltransferase H (159 aa).

S-adenosyl-L-methionine contacts are provided by residues leucine 76, glycine 108, and 127-132; that span reads FSKMTF.

This sequence belongs to the RNA methyltransferase RlmH family. In terms of assembly, homodimer.

It is found in the cytoplasm. The enzyme catalyses pseudouridine(1915) in 23S rRNA + S-adenosyl-L-methionine = N(3)-methylpseudouridine(1915) in 23S rRNA + S-adenosyl-L-homocysteine + H(+). Its function is as follows. Specifically methylates the pseudouridine at position 1915 (m3Psi1915) in 23S rRNA. This chain is Ribosomal RNA large subunit methyltransferase H, found in Exiguobacterium sibiricum (strain DSM 17290 / CCUG 55495 / CIP 109462 / JCM 13490 / 255-15).